Consider the following 667-residue polypeptide: UvrABC system protein C (667 aa).

The 80-residue stretch at 43–122 folds into the GIY-YIG domain; it reads AEPGCYLMRD…IKNQQPHFNV (80 aa). The 36-residue stretch at 232–267 folds into the UVR domain; it reads QELKVLLEKQMERYSDRMDYESAANIRDQIKGLEQL.

It belongs to the UvrC family. Interacts with UvrB in an incision complex.

The protein localises to the cytoplasm. Functionally, the UvrABC repair system catalyzes the recognition and processing of DNA lesions. UvrC both incises the 5' and 3' sides of the lesion. The N-terminal half is responsible for the 3' incision and the C-terminal half is responsible for the 5' incision. The sequence is that of UvrABC system protein C from Prochlorococcus marinus (strain MIT 9313).